Consider the following 96-residue polypeptide: UPF0235 protein Spro_4033 (96 aa).

The protein belongs to the UPF0235 family.

The polypeptide is UPF0235 protein Spro_4033 (Serratia proteamaculans (strain 568)).